We begin with the raw amino-acid sequence, 1396 residues long: G2/mitotic-specific cyclin-B3 (1396 aa).

Disordered regions lie at residues 1–64 (MPPP…TNAS), 259–398 (KEKP…PQME), and 477–500 (TTEK…PGEL). Positions 10 to 34 (SKLETEKAQSNKITPREEQQSEKIG) are enriched in basic and acidic residues. The D-box signature appears at 54–62 (RSVFEDVTN). The span at 264-273 (VKKPHFRKKK) shows a compositional bias: basic residues. Residues 306 to 315 (LQENTNNKDA) are compositionally biased toward polar residues. Position 703 is a phosphoserine (Ser703). Residues 775-796 (VDEPLSHQSPHIQNHSDTTKEA) are disordered. The segment covering 780-790 (SHQSPHIQNHS) has biased composition (polar residues).

This sequence belongs to the cyclin family. Cyclin AB subfamily. As to quaternary structure, interacts with CDK2 kinase. Post-translationally, ubiquitinated. Ubiquitination leads to its degradation during anaphase entry, after degradation of CCNB1. In terms of tissue distribution, expressed in testis. Also expressed in the fetal ovary, but not in the adult.

It is found in the nucleus. Its function is as follows. Cyclins are positive regulatory subunits of the cyclin-dependent kinases (CDKs), and thereby play an essential role in the control of the cell cycle, notably via their destruction during cell division. Its tissue specificity suggest that it may be required during early meiotic prophase I. The chain is G2/mitotic-specific cyclin-B3 (Ccnb3) from Mus musculus (Mouse).